The chain runs to 199 residues: UPF0301 protein Vapar_4617 (199 aa).

It belongs to the UPF0301 (AlgH) family.

This Variovorax paradoxus (strain S110) protein is UPF0301 protein Vapar_4617.